Consider the following 265-residue polypeptide: Glutamate racemase 2 (265 aa).

Substrate-binding positions include 7–8 and 39–40; these read DS and YG. Cys-70 serves as the catalytic Proton donor/acceptor. Residue 71-72 coordinates substrate; sequence NT. Cys-182 functions as the Proton donor/acceptor in the catalytic mechanism. Residue 183–184 coordinates substrate; sequence TH.

This sequence belongs to the aspartate/glutamate racemases family.

The catalysed reaction is L-glutamate = D-glutamate. The protein operates within cell wall biogenesis; peptidoglycan biosynthesis. Functionally, provides the (R)-glutamate required for cell wall biosynthesis. This is Glutamate racemase 2 (yrpC) from Bacillus subtilis (strain 168).